We begin with the raw amino-acid sequence, 1009 residues long: Serine/threonine-protein phosphatase BSL2 homolog (1009 aa).

A disordered region spans residues 1–48 (MDVDSRMTTESDSDSDAAAQGGGGGGFGSETSSASPSAPGTPTAMGAG). The segment covering 29 to 45 (SETSSASPSAPGTPTAM) has biased composition (low complexity). Kelch repeat units lie at residues 136–182 (SSAG…VATA), 240–288 (FLLT…TASA), 293–344 (LLLL…FVNA), 349–396 (SGGA…DAAG), and 417–463 (MIYV…IQAG). The interval 549 to 572 (QVNGEAEHSPDREQSPDATPSVKQ) is disordered. A compositionally biased stretch (basic and acidic residues) spans 553–563 (EAEHSPDREQS). Mn(2+) contacts are provided by aspartate 711, histidine 713, aspartate 745, and asparagine 777. The active-site Proton donor is the histidine 778. Residues histidine 830 and histidine 909 each coordinate Mn(2+). Residues 984-1009 (NANRPPTPTRGRPQAANNDRGSLAWI) form a disordered region.

It belongs to the PPP phosphatase family. BSU subfamily. Mn(2+) is required as a cofactor.

It is found in the nucleus. The enzyme catalyses O-phospho-L-seryl-[protein] + H2O = L-seryl-[protein] + phosphate. It catalyses the reaction O-phospho-L-threonyl-[protein] + H2O = L-threonyl-[protein] + phosphate. This is Serine/threonine-protein phosphatase BSL2 homolog (BSL2) from Oryza sativa subsp. japonica (Rice).